Here is a 180-residue protein sequence, read N- to C-terminus: Ubiquitin-conjugating enzyme E2 20 (180 aa).

Residues 1 to 33 form a disordered region; that stretch reads MAAVNGYQGNTPADPPASNGSKQPAAPTKTVDS. The region spanning 35–180 is the UBC core domain; sequence SVLKRLQSEL…VEKLYKPPSA (146 aa). Catalysis depends on Cys-119, which acts as the Glycyl thioester intermediate.

Belongs to the ubiquitin-conjugating enzyme family. As to expression, expressed in all tissues with cell division activities and in mature leaves.

It carries out the reaction S-ubiquitinyl-[E1 ubiquitin-activating enzyme]-L-cysteine + [E2 ubiquitin-conjugating enzyme]-L-cysteine = [E1 ubiquitin-activating enzyme]-L-cysteine + S-ubiquitinyl-[E2 ubiquitin-conjugating enzyme]-L-cysteine.. Its pathway is protein modification; protein ubiquitination. Accepts the ubiquitin from the E1 complex and catalyzes its covalent attachment to other proteins. In Arabidopsis thaliana (Mouse-ear cress), this protein is Ubiquitin-conjugating enzyme E2 20 (UBC20).